The following is a 702-amino-acid chain: Polyribonucleotide nucleotidyltransferase 3 (702 aa).

Positions 483 and 489 each coordinate Mg(2+). Residues Pro550–Ile609 form the KH domain. The S1 motif domain occupies Gly619 to Lys687.

This sequence belongs to the polyribonucleotide nucleotidyltransferase family. Mg(2+) is required as a cofactor.

It localises to the cytoplasm. The enzyme catalyses RNA(n+1) + phosphate = RNA(n) + a ribonucleoside 5'-diphosphate. Functionally, involved in mRNA degradation. Catalyzes the phosphorolysis of single-stranded polyribonucleotides processively in the 3'- to 5'-direction. This Alkaliphilus metalliredigens (strain QYMF) protein is Polyribonucleotide nucleotidyltransferase 3.